A 372-amino-acid chain; its full sequence is Aminomethyltransferase (372 aa).

It belongs to the GcvT family. The glycine cleavage system is composed of four proteins: P, T, L and H.

The catalysed reaction is N(6)-[(R)-S(8)-aminomethyldihydrolipoyl]-L-lysyl-[protein] + (6S)-5,6,7,8-tetrahydrofolate = N(6)-[(R)-dihydrolipoyl]-L-lysyl-[protein] + (6R)-5,10-methylene-5,6,7,8-tetrahydrofolate + NH4(+). In terms of biological role, the glycine cleavage system catalyzes the degradation of glycine. The protein is Aminomethyltransferase of Streptomyces coelicolor (strain ATCC BAA-471 / A3(2) / M145).